We begin with the raw amino-acid sequence, 186 residues long: MTDILTNIFTILSRMSLAEGFGFNTDIFETNILNLAVVLGILLTSGREFFVSLLQNRQQNILQSINDADERYKEAAEKLQQAQNEFEQAKLEADQILAQSKKTASEIEVGLMNLIKEDTKKLLDMKQATISFEEEKAISEIRRQVIRLALQRALEQSKSRLNRRLQKRVTRLNIGLLGRLVTPNDV.

The chain crosses the membrane as a helical span at residues 27-43; sequence IFETNILNLAVVLGILL.

Belongs to the ATPase B chain family. F-type ATPases have 2 components, F(1) - the catalytic core - and F(0) - the membrane proton channel. F(1) has five subunits: alpha(3), beta(3), gamma(1), delta(1), epsilon(1). F(0) has four main subunits: a(1), b(1), b'(1) and c(10-14). The alpha and beta chains form an alternating ring which encloses part of the gamma chain. F(1) is attached to F(0) by a central stalk formed by the gamma and epsilon chains, while a peripheral stalk is formed by the delta, b and b' chains.

It localises to the plastid. Its subcellular location is the chloroplast thylakoid membrane. Functionally, f(1)F(0) ATP synthase produces ATP from ADP in the presence of a proton or sodium gradient. F-type ATPases consist of two structural domains, F(1) containing the extramembraneous catalytic core and F(0) containing the membrane proton channel, linked together by a central stalk and a peripheral stalk. During catalysis, ATP synthesis in the catalytic domain of F(1) is coupled via a rotary mechanism of the central stalk subunits to proton translocation. Component of the F(0) channel, it forms part of the peripheral stalk, linking F(1) to F(0). The protein is ATP synthase subunit b, chloroplastic of Mesostigma viride (Green alga).